The chain runs to 402 residues: Ferredoxin--NADP reductase (402 aa).

The CpcD-like domain maps to 18–74; the sequence is NRLFIYEVVGLGGDGRNENSLVRKSGTTFITVPYARMNQEMQRITKLGGKIVSIRPA. Residues 80–101 are disordered; sequence IVSEGQSSAQASAQSPMASSTK. The segment covering 85–99 has biased composition (low complexity); that stretch reads QSSAQASAQSPMASS. Residues 120 to 245 enclose the FAD-binding FR-type domain; that stretch reads KTPFLGKCIE…TGPVGKEMLL (126 aa). FAD is bound by residues 179 to 182, 200 to 202, Y206, 218 to 220, and T260; these read RLYS, CVR, and VCS. The NADP(+) site is built by S182 and R202. NADP(+) is bound by residues T260, 292–293, 322–323, K332, 332–336, 361–362, and E400; these read VP, SR, KVYVQ, and GL.

It belongs to the ferredoxin--NADP reductase type 1 family. The cofactor is FAD.

The protein resides in the cellular thylakoid membrane. It carries out the reaction 2 reduced [2Fe-2S]-[ferredoxin] + NADP(+) + H(+) = 2 oxidized [2Fe-2S]-[ferredoxin] + NADPH. The protein is Ferredoxin--NADP reductase (petH) of Picosynechococcus sp. (strain ATCC 27264 / PCC 7002 / PR-6) (Agmenellum quadruplicatum).